The chain runs to 283 residues: MADITAALVKELRERTGAGMMDCKKALTEANGDIELAIENMRKSGAIKAAKKAGNVAADGVIKTRIEGNFGVILEVNCQTDFVAKDAGFQAFADKVLDAAFAGKITDVDVLKAQFEEERVALVAKIGENINIRRVASLEGDVLGSYLHGARIGVLISATAADEELVKQLAMHVAASKPEFVKPEDVSAEVVAKEYQVQLDIAMQSGKPKEIAEKMVEGRMKKFTGEVSLTGQPFVIDPSKTVGQLLKEKNADVTSFIRFEVGEGIEKAETDFAAEVAAMSKQS.

The segment at T80 to V83 is involved in Mg(2+) ion dislocation from EF-Tu.

The protein belongs to the EF-Ts family.

The protein localises to the cytoplasm. Its function is as follows. Associates with the EF-Tu.GDP complex and induces the exchange of GDP to GTP. It remains bound to the aminoacyl-tRNA.EF-Tu.GTP complex up to the GTP hydrolysis stage on the ribosome. The protein is Elongation factor Ts of Erwinia tasmaniensis (strain DSM 17950 / CFBP 7177 / CIP 109463 / NCPPB 4357 / Et1/99).